Consider the following 35-residue polypeptide: Phospholipase A2 neuwieditoxin-1 (35 aa).

Ca(2+) contacts are provided by Y27, G29, and G31.

It belongs to the phospholipase A2 family. Group II subfamily. D49 sub-subfamily. As to quaternary structure, dimer. Ca(2+) serves as cofactor. In terms of tissue distribution, expressed by the venom gland.

The protein localises to the secreted. The catalysed reaction is a 1,2-diacyl-sn-glycero-3-phosphocholine + H2O = a 1-acyl-sn-glycero-3-phosphocholine + a fatty acid + H(+). Its function is as follows. Snake venom phospholipase A2 (PLA2) that shows presynaptic neurotoxicity. 10 ug/ml of this protein produce complete neuromuscular blockade up to 80 minutes, without inhibiting the responses to acetylcholine (ACh) and potassium chloride (KCl). In addition, it produces a calcium-dependent blockade of acetylcholine release and causes appearance of giant miniature end-plate potentials. PLA2 catalyzes the calcium-dependent hydrolysis of the 2-acyl groups in 3-sn-phosphoglycerides. The polypeptide is Phospholipase A2 neuwieditoxin-1 (Bothrops pauloensis (Neuwied's lancehead)).